A 63-amino-acid chain; its full sequence is Cytochrome c oxidase subunit 5C (63 aa).

The helical transmembrane segment at 16–34 (VVKEIFIGLTLGLVAGGMW) threads the bilayer.

Belongs to the cytochrome c oxidase subunit 5C family.

It localises to the mitochondrion inner membrane. In terms of biological role, this protein is one of the nuclear-coded polypeptide chains of cytochrome c oxidase, the terminal oxidase in mitochondrial electron transport. The polypeptide is Cytochrome c oxidase subunit 5C (COX5C) (Hordeum vulgare (Barley)).